Here is a 458-residue protein sequence, read N- to C-terminus: tRNA modification GTPase MnmE (458 aa).

Residues Arg-22, Glu-84, and Arg-123 each contribute to the (6S)-5-formyl-5,6,7,8-tetrahydrofolate site. Residues 220-379 (GIATAIIGRP…LEKAIADLFF (160 aa)) form the TrmE-type G domain. Asn-230 is a K(+) binding site. GTP is bound by residues 230-235 (NVGKSS), 249-255 (TDIAGTT), and 274-277 (DTAG). Ser-234 is a binding site for Mg(2+). K(+) is bound by residues Thr-249, Ile-251, and Thr-254. Thr-255 contributes to the Mg(2+) binding site. Residue Lys-458 coordinates (6S)-5-formyl-5,6,7,8-tetrahydrofolate.

The protein belongs to the TRAFAC class TrmE-Era-EngA-EngB-Septin-like GTPase superfamily. TrmE GTPase family. In terms of assembly, homodimer. Heterotetramer of two MnmE and two MnmG subunits. K(+) serves as cofactor.

Its subcellular location is the cytoplasm. In terms of biological role, exhibits a very high intrinsic GTPase hydrolysis rate. Involved in the addition of a carboxymethylaminomethyl (cmnm) group at the wobble position (U34) of certain tRNAs, forming tRNA-cmnm(5)s(2)U34. The protein is tRNA modification GTPase MnmE of Bacillus anthracis.